The chain runs to 188 residues: NADH-quinone oxidoreductase subunit I 2 (188 aa).

2 4Fe-4S ferredoxin-type domains span residues 56 to 88 (HFLK…VVPY) and 98 to 127 (AKFE…LGQQ). [4Fe-4S] cluster contacts are provided by C68, C71, C74, C78, C107, C110, C113, and C117.

The protein belongs to the complex I 23 kDa subunit family. As to quaternary structure, NDH-1 is composed of 14 different subunits. Subunits NuoA, H, J, K, L, M, N constitute the membrane sector of the complex. It depends on [4Fe-4S] cluster as a cofactor.

It is found in the cell inner membrane. It carries out the reaction a quinone + NADH + 5 H(+)(in) = a quinol + NAD(+) + 4 H(+)(out). In terms of biological role, NDH-1 shuttles electrons from NADH, via FMN and iron-sulfur (Fe-S) centers, to quinones in the respiratory chain. The immediate electron acceptor for the enzyme in this species is believed to be ubiquinone. Couples the redox reaction to proton translocation (for every two electrons transferred, four hydrogen ions are translocated across the cytoplasmic membrane), and thus conserves the redox energy in a proton gradient. In Rhizobium meliloti (strain 1021) (Ensifer meliloti), this protein is NADH-quinone oxidoreductase subunit I 2.